A 192-amino-acid chain; its full sequence is MATKIRLQRHGRKGYAFYKIVVADSRAPRDGKFIERIGSYNPNTNPATIDLNFERALYWIGVGAQPTDTARNILSREGVLMMKHLLGGVKKGAFDQAAAENKFEAWLKGKKDALNNMKAKVKEAAVADDKVKLEAEKAVNKARAEAVAEKKAAEAKAKAEAEAAAAAEEAAETEETPVEAAAEEAPAAESAE.

The interval 153 to 192 (AEAKAKAEAEAAAAAEEAAETEETPVEAAAEEAPAAESAE) is disordered. The segment covering 178 to 192 (VEAAAEEAPAAESAE) has biased composition (low complexity).

The protein belongs to the bacterial ribosomal protein bS16 family.

This is Small ribosomal subunit protein bS16 from Porphyromonas gingivalis (strain ATCC BAA-308 / W83).